Reading from the N-terminus, the 386-residue chain is Succinate--CoA ligase [ADP-forming] subunit beta (386 aa).

The ATP-grasp domain occupies 9-244 (KELLKQFGVT…LDEEDPAEIE (236 aa)). ATP-binding positions include Lys-46, 53–55 (GRG), Glu-99, Ala-102, and Glu-107. Mg(2+) contacts are provided by Asn-199 and Asp-213. Substrate contacts are provided by residues Asn-264 and 321 to 323 (GIM).

Belongs to the succinate/malate CoA ligase beta subunit family. In terms of assembly, heterotetramer of two alpha and two beta subunits. Mg(2+) is required as a cofactor.

The catalysed reaction is succinate + ATP + CoA = succinyl-CoA + ADP + phosphate. It catalyses the reaction GTP + succinate + CoA = succinyl-CoA + GDP + phosphate. It participates in carbohydrate metabolism; tricarboxylic acid cycle; succinate from succinyl-CoA (ligase route): step 1/1. Succinyl-CoA synthetase functions in the citric acid cycle (TCA), coupling the hydrolysis of succinyl-CoA to the synthesis of either ATP or GTP and thus represents the only step of substrate-level phosphorylation in the TCA. The beta subunit provides nucleotide specificity of the enzyme and binds the substrate succinate, while the binding sites for coenzyme A and phosphate are found in the alpha subunit. The protein is Succinate--CoA ligase [ADP-forming] subunit beta of Bordetella pertussis (strain Tohama I / ATCC BAA-589 / NCTC 13251).